An 83-amino-acid chain; its full sequence is Apolipoprotein C-I (83 aa).

A signal peptide spans M1–A26.

The protein belongs to the apolipoprotein C1 family.

The protein resides in the secreted. Its function is as follows. Inhibitor of lipoprotein binding to the low density lipoprotein (LDL) receptor, LDL receptor-related protein, and very low density lipoprotein (VLDL) receptor. Associates with high density lipoproteins (HDL) and the triacylglycerol-rich lipoproteins in the plasma and makes up about 10% of the protein of the VLDL and 2% of that of HDL. Appears to interfere directly with fatty acid uptake and is also the major plasma inhibitor of cholesteryl ester transfer protein (CETP). Binds free fatty acids and reduces their intracellular esterification. Modulates the interaction of APOE with beta-migrating VLDL and inhibits binding of beta-VLDL to the LDL receptor-related protein. The chain is Apolipoprotein C-I (APOC1) from Rousettus aegyptiacus (Egyptian fruit bat).